The sequence spans 186 residues: Large ribosomal subunit protein uL22 (186 aa).

Basic and acidic residues-rich tracts occupy residues V157–K167 and R177–E186. The segment at V157–E186 is disordered.

Belongs to the universal ribosomal protein uL22 family.

In Drosophila yakuba (Fruit fly), this protein is Large ribosomal subunit protein uL22 (RpL17).